The sequence spans 209 residues: Tektin bundle-interacting protein 1 (209 aa).

As to quaternary structure, microtubule inner protein component of sperm flagellar doublet microtubules.

The protein localises to the cytoplasm. Its subcellular location is the cytoskeleton. It localises to the cilium axoneme. It is found in the flagellum axoneme. Its function is as follows. Microtubule inner protein (MIP) part of the dynein-decorated doublet microtubules (DMTs) in cilia axoneme, which is required for motile cilia beating. Located at the center of the tektin bundle where may function to recruit tektins or stabilize the bundle. This Macaca fascicularis (Crab-eating macaque) protein is Tektin bundle-interacting protein 1 (TEKTIP1).